Here is a 461-residue protein sequence, read N- to C-terminus: UPF0210 protein LCABL_10110 (461 aa).

This sequence belongs to the UPF0210 family. Homodimer.

The sequence is that of UPF0210 protein LCABL_10110 from Lacticaseibacillus casei (strain BL23) (Lactobacillus casei).